The following is a 249-amino-acid chain: Formylaminopyrimidine import ATP-binding protein ThiZ (249 aa).

One can recognise an ABC transporter domain in the interval 6–228 (LTFEEVSFAY…RRKMETTEKM (223 aa)). 39–46 (AKSGSGKS) contributes to the ATP binding site.

It belongs to the ABC transporter superfamily. As to quaternary structure, the complex is likely composed of an ATP-binding protein (ThiZ), a transmembrane protein (ThiX) and a solute-binding protein (ThiY).

The protein resides in the cell membrane. It functions in the pathway cofactor biosynthesis; thiamine diphosphate biosynthesis. Participates in a thiamine pyrimidine salvage pathway as part of the ABC transporter complex ThiXYZ involved in the import of thiamine degradation products such as the formylaminopyrimidine N-formyl-4-amino-5-aminomethyl-2-methylpyrimidine (FAMP). Is likely responsible for energy coupling to the transport system. This is Formylaminopyrimidine import ATP-binding protein ThiZ from Halalkalibacterium halodurans (strain ATCC BAA-125 / DSM 18197 / FERM 7344 / JCM 9153 / C-125) (Bacillus halodurans).